A 418-amino-acid polypeptide reads, in one-letter code: Hepatic and glial cell adhesion molecule (418 aa).

Residues Met1–Gly33 form the signal peptide. Residues Val34–Val141 form the Ig-like V-type domain. At Val34–Ser240 the chain is on the extracellular side. N-linked (GlcNAc...) asparagine glycans are attached at residues Asn35, Asn138, Asn167, and Asn189. The Ig-like C2-type domain occupies Pro148–Thr234. Residues Cys168 and Cys217 are joined by a disulfide bond. A helical membrane pass occupies residues Leu241–Ala261. The Cytoplasmic portion of the chain corresponds to Cys262–Ala418. The disordered stretch occupies residues Lys271 to Ala418. A Phosphoserine modification is found at Ser280. The span at Ser287–Asn308 shows a compositional bias: basic and acidic residues. A phosphoserine mark is found at Ser352 and Ser379. Residues Gly385–Ala400 are compositionally biased toward low complexity.

As to quaternary structure, homodimer. Dimer formation occurs predominantly through cis interactions on the cell surface. Part of a complex containing MLC1, TRPV4, AQP4 and ATP1B1. Interacts with CLCN2. N-glycosylated.

The protein resides in the cytoplasm. The protein localises to the cell membrane. Involved in regulating cell motility and cell-matrix interactions. May inhibit cell growth through suppression of cell proliferation. In glia, associates and targets CLCN2 at astrocytic processes and myelinated fiber tracts where it may regulate transcellular chloride flux involved in neuron excitability. In Bos taurus (Bovine), this protein is Hepatic and glial cell adhesion molecule.